The sequence spans 194 residues: Small ribosomal subunit protein uS7 (194 aa).

The protein belongs to the universal ribosomal protein uS7 family. As to quaternary structure, part of the 30S ribosomal subunit.

In terms of biological role, one of the primary rRNA binding proteins, it binds directly to 16S rRNA where it nucleates assembly of the head domain of the 30S subunit. Is located at the subunit interface close to the decoding center. In Archaeoglobus fulgidus (strain ATCC 49558 / DSM 4304 / JCM 9628 / NBRC 100126 / VC-16), this protein is Small ribosomal subunit protein uS7.